The chain runs to 310 residues: Protein BIG GRAIN 1 (310 aa).

Residues S77–S140 form a disordered region. Positions S90 to A106 are enriched in low complexity.

The protein belongs to the BIG GRAIN 1 (BG1) plant protein family. In terms of tissue distribution, mostly expressed in the vascular tissues of leaves, culms and young panicles, especially in hulls.

The protein localises to the cell membrane. Involved in auxin transport. Positive regulator of the auxin signaling pathway involved in gravitropism, plant growth and grain development. The chain is Protein BIG GRAIN 1 from Oryza sativa subsp. japonica (Rice).